Here is a 250-residue protein sequence, read N- to C-terminus: Peptidyl-tRNA hydrolase, mitochondrial (250 aa).

The transit peptide at 1–45 (MRLLSGASASRIPCPLLSLARARARCLPVPASATACRAASSSAAA) directs the protein to the mitochondrion. Tyr68 lines the tRNA pocket. His73 (proton acceptor) is an active-site residue. Residues Phe118, Asn120, and Asn166 each contribute to the tRNA site.

The protein belongs to the PTH family.

Its subcellular location is the mitochondrion. The catalysed reaction is an N-acyl-L-alpha-aminoacyl-tRNA + H2O = an N-acyl-L-amino acid + a tRNA + H(+). The natural substrate for this enzyme may be peptidyl-tRNAs which drop off the ribosome during protein synthesis. In Oryza sativa subsp. japonica (Rice), this protein is Peptidyl-tRNA hydrolase, mitochondrial.